The sequence spans 122 residues: Large ribosomal subunit protein bL12 (122 aa).

The protein belongs to the bacterial ribosomal protein bL12 family. In terms of assembly, homodimer. Part of the ribosomal stalk of the 50S ribosomal subunit. Forms a multimeric L10(L12)X complex, where L10 forms an elongated spine to which 2 to 4 L12 dimers bind in a sequential fashion. Binds GTP-bound translation factors.

Functionally, forms part of the ribosomal stalk which helps the ribosome interact with GTP-bound translation factors. Is thus essential for accurate translation. The polypeptide is Large ribosomal subunit protein bL12 (Glaesserella parasuis serovar 5 (strain SH0165) (Haemophilus parasuis)).